Consider the following 108-residue polypeptide: UPF0145 protein Ava_0420 (108 aa).

Belongs to the UPF0145 family.

This Trichormus variabilis (strain ATCC 29413 / PCC 7937) (Anabaena variabilis) protein is UPF0145 protein Ava_0420.